Consider the following 218-residue polypeptide: Cytochrome b6 (218 aa).

A helical transmembrane segment spans residues 35 to 55 (IFYCLGGITLVCFLIQFATGF). Cysteine 38 contributes to the heme c binding site. Heme b is bound by residues histidine 89 and histidine 103. Transmembrane regions (helical) follow at residues 93 to 113 (ASMMVLMLILHVFRVYLTGGF), 119 to 139 (LTWVTGVTMAVITVSFGVTGY), and 189 to 209 (LHTFVMPWLLAVFMLMHFLMI). Histidine 190 and histidine 205 together coordinate heme b.

It belongs to the cytochrome b family. PetB subfamily. The 4 large subunits of the cytochrome b6-f complex are cytochrome b6, subunit IV (17 kDa polypeptide, PetD), cytochrome f and the Rieske protein, while the 4 small subunits are PetG, PetL, PetM and PetN. The complex functions as a dimer. Heme b is required as a cofactor. It depends on heme c as a cofactor.

It localises to the cellular thylakoid membrane. Functionally, component of the cytochrome b6-f complex, which mediates electron transfer between photosystem II (PSII) and photosystem I (PSI), cyclic electron flow around PSI, and state transitions. The chain is Cytochrome b6 from Synechococcus sp. (strain CC9902).